The sequence spans 166 residues: 3-isopropylmalate dehydratase small subunit (166 aa).

Belongs to the LeuD family. LeuD type 2 subfamily. In terms of assembly, heterodimer of LeuC and LeuD.

It carries out the reaction (2R,3S)-3-isopropylmalate = (2S)-2-isopropylmalate. The protein operates within amino-acid biosynthesis; L-leucine biosynthesis; L-leucine from 3-methyl-2-oxobutanoate: step 2/4. Catalyzes the isomerization between 2-isopropylmalate and 3-isopropylmalate, via the formation of 2-isopropylmaleate. This Nautilia profundicola (strain ATCC BAA-1463 / DSM 18972 / AmH) protein is 3-isopropylmalate dehydratase small subunit.